Reading from the N-terminus, the 142-residue chain is Large ribosomal subunit protein uL11 (142 aa).

It belongs to the universal ribosomal protein uL11 family. Part of the ribosomal stalk of the 50S ribosomal subunit. Interacts with L10 and the large rRNA to form the base of the stalk. L10 forms an elongated spine to which L12 dimers bind in a sequential fashion forming a multimeric L10(L12)X complex. In terms of processing, one or more lysine residues are methylated.

In terms of biological role, forms part of the ribosomal stalk which helps the ribosome interact with GTP-bound translation factors. This is Large ribosomal subunit protein uL11 from Dichelobacter nodosus (strain VCS1703A).